We begin with the raw amino-acid sequence, 210 residues long: Thymidylate kinase (210 aa).

10–17 (GLEGAGKS) serves as a coordination point for ATP.

Belongs to the thymidylate kinase family.

It catalyses the reaction dTMP + ATP = dTDP + ADP. Functionally, phosphorylation of dTMP to form dTDP in both de novo and salvage pathways of dTTP synthesis. The chain is Thymidylate kinase from Hamiltonella defensa subsp. Acyrthosiphon pisum (strain 5AT).